Here is a 445-residue protein sequence, read N- to C-terminus: Peptide chain release factor 1, mitochondrial (445 aa).

The transit peptide at 1–61 directs the protein to the mitochondrion; the sequence is MNRHLCVWLF…LLSKNWSRRY (61 aa). The interval 297-361 is GGQ domain; it reads PKDLRIDTFR…LRARLYQQII (65 aa). Residues 311-313 carry the GGQ motif; it reads GGQ. Gln313 is modified (N5-methylglutamine).

It belongs to the prokaryotic/mitochondrial release factor family. Post-translationally, methylation of glutamine in the GGQ triplet by HEMK1 is conserved from bacteria to mammals.

Its subcellular location is the mitochondrion. In terms of biological role, mitochondrial peptide chain release factor that directs the termination of translation in response to the peptide chain non-canonical stop codons AGG and AGA. Non-canonical termination codons AGG and AGA are found at the end of MT-CO1/COX1 and MT-ND6/ND6 open reading frames, respectively. Recognizes non-canonical stop codons via a network of interactions between the codon, MTRF1 and the ribosomal RNA (rRNA): in contrast to other translation release factors, which identify the codon in the A-site via direct interactions of amino acid side chains with the bases, MTRF1 repositions the first 2 bases of the stop codon to use an intricate network of interactions that includes residues of the release factor, the rRNA of the small ribosomal subunit, as well as neighboring bases of the mRNA. The polypeptide is Peptide chain release factor 1, mitochondrial (Homo sapiens (Human)).